The chain runs to 131 residues: ATP synthase epsilon chain (131 aa).

The protein belongs to the ATPase epsilon chain family. In terms of assembly, F-type ATPases have 2 components, CF(1) - the catalytic core - and CF(0) - the membrane proton channel. CF(1) has five subunits: alpha(3), beta(3), gamma(1), delta(1), epsilon(1). CF(0) has three main subunits: a, b and c.

It localises to the cell membrane. Produces ATP from ADP in the presence of a proton gradient across the membrane. The polypeptide is ATP synthase epsilon chain (Bacillus licheniformis (strain ATCC 14580 / DSM 13 / JCM 2505 / CCUG 7422 / NBRC 12200 / NCIMB 9375 / NCTC 10341 / NRRL NRS-1264 / Gibson 46)).